Consider the following 179-residue polypeptide: Large ribosomal subunit protein uL6 (179 aa).

This sequence belongs to the universal ribosomal protein uL6 family. As to quaternary structure, part of the 50S ribosomal subunit.

In terms of biological role, this protein binds to the 23S rRNA, and is important in its secondary structure. It is located near the subunit interface in the base of the L7/L12 stalk, and near the tRNA binding site of the peptidyltransferase center. The chain is Large ribosomal subunit protein uL6 from Halothermothrix orenii (strain H 168 / OCM 544 / DSM 9562).